Here is a 333-residue protein sequence, read N- to C-terminus: Autoinducer 2 import system permease protein LsrD (333 aa).

10 consecutive transmembrane segments (helical) span residues 7–27 (YGWEFTLAALLIIEILLFGIA), 45–65 (ICIGIVALPLTMVIVSGGIDI), 70–90 (TIGLCAISLGVMNQAGIPMAA), 91–111 (AIPLTLLVGAICGVINAALIL), 118–138 (LVITLGTLYLFGGSALLLSGI), 162–182 (LFGLPMPLMLFLLCVLICWLF), 212–232 (TLYLLYTLTGIASAIAAIVLV), 240–260 (SDLGASFLMPAITAVVLGGAN), 261–281 (IYGGSGSIIGTALAILLIGYL), and 288–308 (AGVPNQVSSALAGALLIIAVV).

It belongs to the binding-protein-dependent transport system permease family. AraH/RbsC subfamily. In terms of assembly, the complex is composed of two ATP-binding proteins (LsrA), two transmembrane proteins (LsrC and LsrD) and a solute-binding protein (LsrB).

The protein resides in the cell inner membrane. Part of the ABC transporter complex LsrABCD involved in autoinducer 2 (AI-2) import. Probably responsible for the translocation of the substrate across the membrane. This chain is Autoinducer 2 import system permease protein LsrD (lsrD), found in Photorhabdus luminescens (Xenorhabdus luminescens).